A 462-amino-acid chain; its full sequence is GTPase HflX (462 aa).

One can recognise a Hflx-type G domain in the interval 255–452 (PAVGIVGYTN…LLEEKIYNLP (198 aa)). GTP-binding positions include 261-268 (GYTNAGKS), 286-290 (FATLD), 308-311 (DTVG), 374-377 (NKID), and 430-432 (SAY). The Mg(2+) site is built by serine 268 and threonine 288.

Belongs to the TRAFAC class OBG-HflX-like GTPase superfamily. HflX GTPase family. Monomer. Associates with the 50S ribosomal subunit. Mg(2+) serves as cofactor.

The protein resides in the cytoplasm. GTPase that associates with the 50S ribosomal subunit and may have a role during protein synthesis or ribosome biogenesis. This chain is GTPase HflX, found in Leptospira borgpetersenii serovar Hardjo-bovis (strain JB197).